The sequence spans 34 residues: Beta-theraphotoxin-Pmu1a (34 aa).

3 disulfide bridges follow: C3–C18, C10–C23, and C17–C30. L34 is modified (leucine amide).

Belongs to the neurotoxin 10 (Hwtx-1) family. 34 (Jztx-26) subfamily. Expressed by the venom gland.

The protein localises to the secreted. Its function is as follows. Spider venom neurotoxin that blocks voltage-gated sodium channels Nav1.3/SCN3A and Nav1.8/SCN10A in human (IC(50)=2 uM and IC(50)=4 uM, respectively) and rat (IC(50)=2 uM and IC(50)=2.5 uM, respectively). This chain is Beta-theraphotoxin-Pmu1a, found in Pterinochilus murinus (Mombasa golden starburst baboon spider).